Consider the following 122-residue polypeptide: Small ribosomal subunit protein uS13 (122 aa).

The disordered stretch occupies residues 92 to 122; the sequence is HRRGLPVRGQRTHTNARTRKGPAKPIAGKKK.

The protein belongs to the universal ribosomal protein uS13 family. Part of the 30S ribosomal subunit. Forms a loose heterodimer with protein S19. Forms two bridges to the 50S subunit in the 70S ribosome.

In terms of biological role, located at the top of the head of the 30S subunit, it contacts several helices of the 16S rRNA. In the 70S ribosome it contacts the 23S rRNA (bridge B1a) and protein L5 of the 50S subunit (bridge B1b), connecting the 2 subunits; these bridges are implicated in subunit movement. Contacts the tRNAs in the A and P-sites. The chain is Small ribosomal subunit protein uS13 from Paracoccus denitrificans (strain Pd 1222).